Reading from the N-terminus, the 507-residue chain is GMP synthase [glutamine-hydrolyzing] (507 aa).

The 190-residue stretch at 4–193 (KIIILDFGSQ…VVDVCGCKQD (190 aa)) folds into the Glutamine amidotransferase type-1 domain. Catalysis depends on Cys79, which acts as the Nucleophile. Active-site residues include His167 and Glu169. Positions 194–382 (WSPASFIEST…LGMPEHLITR (189 aa)) constitute a GMPS ATP-PPase domain. 221 to 227 (SGGVDSS) contributes to the ATP binding site.

Homodimer.

The catalysed reaction is XMP + L-glutamine + ATP + H2O = GMP + L-glutamate + AMP + diphosphate + 2 H(+). It participates in purine metabolism; GMP biosynthesis; GMP from XMP (L-Gln route): step 1/1. Catalyzes the synthesis of GMP from XMP. The sequence is that of GMP synthase [glutamine-hydrolyzing] from Bacteroides fragilis (strain ATCC 25285 / DSM 2151 / CCUG 4856 / JCM 11019 / LMG 10263 / NCTC 9343 / Onslow / VPI 2553 / EN-2).